A 326-amino-acid chain; its full sequence is Polyprenal reductase (326 aa).

5 helical membrane-spanning segments follow: residues 26–46, 84–104, 167–187, 212–232, and 256–276; these read MMFG…TFVE, HFYT…VSTV, INLS…IALL, ILYL…NMIL, and LFNL…FCIA.

Belongs to the steroid 5-alpha reductase family. Polyprenal reductase subfamily.

Its subcellular location is the endoplasmic reticulum membrane. It catalyses the reaction a di-trans,poly-cis-dolichal + NADP(+) = a di-trans,poly-cis-polyprenal + NADPH + H(+). The protein operates within protein modification; protein glycosylation. Plays a key role in early steps of protein N-linked glycosylation by being involved in the conversion of polyprenol into dolichol. Acts as a polyprenal reductase that mediates the reduction of polyprenal into dolichal in a NADP-dependent mechanism. Dolichols are required for the synthesis of dolichol-linked monosaccharides and the oligosaccharide precursor used for N-glycosylation. In Drosophila melanogaster (Fruit fly), this protein is Polyprenal reductase.